The sequence spans 180 residues: SAGA-associated factor 11 homolog (180 aa).

The segment at 98 to 119 (CSCPNCNRIVAASRFAPHLEKC) adopts an SGF11-type zinc-finger fold. A disordered region spans residues 138–180 (RDGGNYFGADEDDEDDADWSGEKRKKKIAPVRTNGSKKNGKTS). A compositionally biased stretch (acidic residues) spans 146–156 (ADEDDEDDADW).

The protein belongs to the SGF11 family. In terms of assembly, component of some SAGA transcription coactivator-HAT complexes. Within the SAGA complex, participates in a subcomplex of SAGA called the DUB module (deubiquitination module).

It localises to the nucleus. Functionally, component of the transcription regulatory histone acetylation (HAT) complex SAGA, a multiprotein complex that activates transcription by remodeling chromatin and mediating histone acetylation and deubiquitination. Within the SAGA complex, participates in a subcomplex that specifically deubiquitinates histone H2B. The SAGA complex is recruited to specific gene promoters by activators, where it is required for transcription. The protein is SAGA-associated factor 11 homolog of Aedes aegypti (Yellowfever mosquito).